Here is a 161-residue protein sequence, read N- to C-terminus: Transcriptional regulator MraZ (161 aa).

2 consecutive SpoVT-AbrB domains span residues 7–55 (RYTN…GPAF) and 84–127 (SAEL…EPGA).

The protein belongs to the MraZ family. In terms of assembly, forms oligomers.

It is found in the cytoplasm. The protein localises to the nucleoid. This is Transcriptional regulator MraZ from Parvibaculum lavamentivorans (strain DS-1 / DSM 13023 / NCIMB 13966).